We begin with the raw amino-acid sequence, 287 residues long: Nucleotide-binding protein HEAR2885 (287 aa).

8 to 15 (GISGSGKS) lines the ATP pocket. 57-60 (DVRS) lines the GTP pocket.

Belongs to the RapZ-like family.

Displays ATPase and GTPase activities. In Herminiimonas arsenicoxydans, this protein is Nucleotide-binding protein HEAR2885.